Consider the following 733-residue polypeptide: Phosphoribosylformylglycinamidine synthase subunit PurL (733 aa).

The active site involves His-41. 2 residues coordinate ATP: Tyr-44 and Lys-83. Glu-85 contributes to the Mg(2+) binding site. Residues 86–89 (SHNH) and Arg-108 contribute to the substrate site. His-87 acts as the Proton acceptor in catalysis. Asp-109 lines the Mg(2+) pocket. The segment at 212–232 (GASFASQELSEESEEKRPSVQ) is disordered. Gln-232 serves as a coordination point for substrate. A Mg(2+)-binding site is contributed by Asp-260. Residue 304–306 (ESQ) coordinates substrate. Positions 488 and 525 each coordinate ATP. Asn-526 provides a ligand contact to Mg(2+). Ser-528 provides a ligand contact to substrate.

This sequence belongs to the FGAMS family. As to quaternary structure, monomer. Part of the FGAM synthase complex composed of 1 PurL, 1 PurQ and 2 PurS subunits.

The protein localises to the cytoplasm. It catalyses the reaction N(2)-formyl-N(1)-(5-phospho-beta-D-ribosyl)glycinamide + L-glutamine + ATP + H2O = 2-formamido-N(1)-(5-O-phospho-beta-D-ribosyl)acetamidine + L-glutamate + ADP + phosphate + H(+). The protein operates within purine metabolism; IMP biosynthesis via de novo pathway; 5-amino-1-(5-phospho-D-ribosyl)imidazole from N(2)-formyl-N(1)-(5-phospho-D-ribosyl)glycinamide: step 1/2. Its function is as follows. Part of the phosphoribosylformylglycinamidine synthase complex involved in the purines biosynthetic pathway. Catalyzes the ATP-dependent conversion of formylglycinamide ribonucleotide (FGAR) and glutamine to yield formylglycinamidine ribonucleotide (FGAM) and glutamate. The FGAM synthase complex is composed of three subunits. PurQ produces an ammonia molecule by converting glutamine to glutamate. PurL transfers the ammonia molecule to FGAR to form FGAM in an ATP-dependent manner. PurS interacts with PurQ and PurL and is thought to assist in the transfer of the ammonia molecule from PurQ to PurL. The polypeptide is Phosphoribosylformylglycinamidine synthase subunit PurL (Thermoanaerobacter sp. (strain X514)).